Reading from the N-terminus, the 417-residue chain is Peptidyl-Asp metalloendopeptidase (417 aa).

A signal peptide spans 1 to 25 (MLSRSIGKAAGGLVLGLSVAAAAHA). His-327 is a binding site for Zn(2+). Glu-328 is an active-site residue. The Zn(2+) site is built by His-331 and His-337.

This sequence belongs to the peptidase M72 family. Requires Zn(2+) as cofactor.

It catalyses the reaction Cleavage of Xaa-|-Asp, Xaa-|-Glu and Xaa-|-cysteic acid bonds.. Metalloprotease, specifically cleaves on the N-terminal side of aspartyl, glutamyl and cysteic acid residues. The polypeptide is Peptidyl-Asp metalloendopeptidase (Stenotrophomonas maltophilia (strain K279a)).